The chain runs to 494 residues: Aspartyl/glutamyl-tRNA(Asn/Gln) amidotransferase subunit B (494 aa).

Belongs to the GatB/GatE family. GatB subfamily. Heterotrimer of A, B and C subunits.

It catalyses the reaction L-glutamyl-tRNA(Gln) + L-glutamine + ATP + H2O = L-glutaminyl-tRNA(Gln) + L-glutamate + ADP + phosphate + H(+). The catalysed reaction is L-aspartyl-tRNA(Asn) + L-glutamine + ATP + H2O = L-asparaginyl-tRNA(Asn) + L-glutamate + ADP + phosphate + 2 H(+). In terms of biological role, allows the formation of correctly charged Asn-tRNA(Asn) or Gln-tRNA(Gln) through the transamidation of misacylated Asp-tRNA(Asn) or Glu-tRNA(Gln) in organisms which lack either or both of asparaginyl-tRNA or glutaminyl-tRNA synthetases. The reaction takes place in the presence of glutamine and ATP through an activated phospho-Asp-tRNA(Asn) or phospho-Glu-tRNA(Gln). This Trichodesmium erythraeum (strain IMS101) protein is Aspartyl/glutamyl-tRNA(Asn/Gln) amidotransferase subunit B.